A 319-amino-acid chain; its full sequence is Oligopeptide transport system permease protein OppB (319 aa).

The next 6 helical transmembrane spans lie at I9–L29, F99–V119, S137–Y157, I183–T203, F248–Y268, and A289–M309. The ABC transmembrane type-1 domain occupies A95 to S305.

The protein belongs to the binding-protein-dependent transport system permease family. OppBC subfamily. As to quaternary structure, the complex is composed of two ATP-binding proteins (OppD and OppF), two transmembrane proteins (OppB and OppC) and a solute-binding protein (OppA).

The protein resides in the cell membrane. In terms of biological role, part of the ABC transporter complex OppABCDF involved in the uptake of oligopeptides. Probably responsible for the translocation of the substrate across the membrane. Essential for uptake of peptides larger than three amino acids and for growth in milk. This chain is Oligopeptide transport system permease protein OppB (oppB), found in Lactococcus lactis subsp. lactis (strain IL1403) (Streptococcus lactis).